A 227-amino-acid chain; its full sequence is uncharacterized protein (227 aa).

3 helical membrane passes run 109 to 128 (MCNV…FAGI), 173 to 192 (AILL…ILLT), and 199 to 221 (ALRV…VMMG).

It is found in the cell membrane. This is an uncharacterized protein from Archaeoglobus fulgidus (strain ATCC 49558 / DSM 4304 / JCM 9628 / NBRC 100126 / VC-16).